A 218-amino-acid polypeptide reads, in one-letter code: MGQKINPLGFRLGTTQSHHSLWFSQPKNYSEGLQEDKKIRDCIKNYVQKNMRTSSGIEGIARIEIQKRIDLIQVIIFMGFPKLLIESRPRGIEELQMTLQKEFNCVNRKLNIAVTRIAKPYGNPNILAEFIAGQLKNRVSFRKAMKKAIELTEQADTKGIQIQIAGRIDGKEIARVEWIREGRVPLQTIRAKIDYCSYTVRTIYGILGIKIWIFLDEE.

The 72-residue stretch at 47–118 folds into the KH type-2 domain; that stretch reads VQKNMRTSSG…KLNIAVTRIA (72 aa).

This sequence belongs to the universal ribosomal protein uS3 family. Part of the 30S ribosomal subunit.

The protein resides in the plastid. It localises to the chloroplast. This Solanum lycopersicum (Tomato) protein is Small ribosomal subunit protein uS3c (rps3).